A 370-amino-acid polypeptide reads, in one-letter code: Versatile peroxidase VPS1 (370 aa).

The signal sequence occupies residues 1–20 (MAFAKLSAFVLALGATVALG). A propeptide spanning residues 21–31 (ESPTHRCLNKR) is cleaved from the precursor. Disulfide bonds link Cys34–Cys46, Cys45–Cys315, Cys65–Cys151, and Cys279–Cys344. Residues Glu67 and Glu71 each coordinate Mn(2+). His78 (proton acceptor) is an active-site residue. 4 residues coordinate Ca(2+): Asp79, Gly97, Asp99, and Ser101. Asn133 carries an N-linked (GlcNAc...) asparagine glycan. Trp201 functions as the Tryptophan radical intermediate in the catalytic mechanism. Position 206 (His206) interacts with heme b. A Ca(2+)-binding site is contributed by Thr207. Heme b is bound at residue 210-214 (AADHV). Mn(2+) is bound at residue Asp212. Residues Asp224, Thr226, Thr229, and Asp231 each coordinate Ca(2+).

Belongs to the peroxidase family. Ligninase subfamily. Heme b is required as a cofactor. The cofactor is Ca(2+).

The protein localises to the secreted. It carries out the reaction 1-(4-hydroxy-3-methoxyphenyl)-2-(2-methoxyphenoxy)propane-1,3-diol + H2O2 = guaiacol + vanillin + glycolaldehyde + H2O. It catalyses the reaction 2 Mn(2+) + H2O2 + 2 H(+) = 2 Mn(3+) + 2 H2O. Functionally, a versatile ligninolytic peroxidase that combines the substrate specificity characteristics of the two other ligninolytic peroxidases, manganese peroxidase and lignin peroxidase. The protein is Versatile peroxidase VPS1 (vps1) of Pleurotus eryngii (Boletus of the steppes).